Here is a 621-residue protein sequence, read N- to C-terminus: 1-deoxy-D-xylulose-5-phosphate synthase (621 aa).

Residues histidine 80 and 121–123 (GHS) contribute to the thiamine diphosphate site. Aspartate 152 contacts Mg(2+). Residues 153-154 (GA), asparagine 181, tyrosine 288, and glutamate 370 each bind thiamine diphosphate. A Mg(2+)-binding site is contributed by asparagine 181.

The protein belongs to the transketolase family. DXPS subfamily. As to quaternary structure, homodimer. Mg(2+) is required as a cofactor. The cofactor is thiamine diphosphate.

It catalyses the reaction D-glyceraldehyde 3-phosphate + pyruvate + H(+) = 1-deoxy-D-xylulose 5-phosphate + CO2. It participates in metabolic intermediate biosynthesis; 1-deoxy-D-xylulose 5-phosphate biosynthesis; 1-deoxy-D-xylulose 5-phosphate from D-glyceraldehyde 3-phosphate and pyruvate: step 1/1. Catalyzes the acyloin condensation reaction between C atoms 2 and 3 of pyruvate and glyceraldehyde 3-phosphate to yield 1-deoxy-D-xylulose-5-phosphate (DXP). The polypeptide is 1-deoxy-D-xylulose-5-phosphate synthase (Aeromonas hydrophila subsp. hydrophila (strain ATCC 7966 / DSM 30187 / BCRC 13018 / CCUG 14551 / JCM 1027 / KCTC 2358 / NCIMB 9240 / NCTC 8049)).